The following is a 295-amino-acid chain: Tyrosine recombinase XerC (295 aa).

The Core-binding (CB) domain occupies 1-85 (MQTYLQKYWN…ALRQFLAFLV (85 aa)). Positions 106–285 (HLPKNINAEQ…NFQHLAEVYD (180 aa)) constitute a Tyr recombinase domain. Residues Arg145, Lys169, His237, Arg240, and His263 contribute to the active site. The active-site O-(3'-phospho-DNA)-tyrosine intermediate is the Tyr272.

Belongs to the 'phage' integrase family. XerC subfamily. Forms a cyclic heterotetrameric complex composed of two molecules of XerC and two molecules of XerD.

Its subcellular location is the cytoplasm. Site-specific tyrosine recombinase, which acts by catalyzing the cutting and rejoining of the recombining DNA molecules. The XerC-XerD complex is essential to convert dimers of the bacterial chromosome into monomers to permit their segregation at cell division. It also contributes to the segregational stability of plasmids. This is Tyrosine recombinase XerC from Mannheimia succiniciproducens (strain KCTC 0769BP / MBEL55E).